Here is a 182-residue protein sequence, read N- to C-terminus: UPF0200 protein Mthe_1012 (182 aa).

An ATP-binding site is contributed by 8–15 (GMPGSGKS).

Belongs to the UPF0200 family.

This is UPF0200 protein Mthe_1012 from Methanothrix thermoacetophila (strain DSM 6194 / JCM 14653 / NBRC 101360 / PT) (Methanosaeta thermophila).